We begin with the raw amino-acid sequence, 252 residues long: Hydroxyacylglutathione hydrolase (252 aa).

Positions 54, 56, 58, 59, 111, 130, and 170 each coordinate Zn(2+).

It belongs to the metallo-beta-lactamase superfamily. Glyoxalase II family. As to quaternary structure, monomer. Requires Zn(2+) as cofactor.

It carries out the reaction an S-(2-hydroxyacyl)glutathione + H2O = a 2-hydroxy carboxylate + glutathione + H(+). Its pathway is secondary metabolite metabolism; methylglyoxal degradation; (R)-lactate from methylglyoxal: step 2/2. Thiolesterase that catalyzes the hydrolysis of S-D-lactoyl-glutathione to form glutathione and D-lactic acid. The protein is Hydroxyacylglutathione hydrolase of Francisella tularensis subsp. tularensis (strain FSC 198).